Reading from the N-terminus, the 107-residue chain is Ig kappa chain V-VI region J539 (107 aa).

The tract at residues 1-23 is framework-1; it reads EIVLTQSPAITAASLGQKVTITC. C23 and C87 form a disulfide bridge. The tract at residues 24 to 33 is complementarity-determining-1; sequence SASSSVSSLH. The segment at 34–48 is framework-2; it reads WYQQKSGTSPKPWIY. The segment at 49–55 is complementarity-determining-2; sequence EISKLAS. The framework-3 stretch occupies residues 56–87; the sequence is GVPARFSGSGSGTSYSLTINTMEAEDAAIYYC. Residues 88-96 are complementarity-determining-3; it reads QQWTYPLIT. Positions 97–106 are framework-4; the sequence is FGAGTKLELK.

This is Ig kappa chain V-VI region J539 from Mus musculus (Mouse).